Consider the following 335-residue polypeptide: MTHTTDVVIIGTGPVGLFAVFQAGMLGMKCHIIDAQEIIGGQCITLYPEKPIYDIPAYPKIAAEELIKQLELQAAPFKPVYHLNQQAIELNKQDDFFEIKTSKNTLIKSKVIIIAAGAGSFGPNKPPLANIEDFEGKSVFYFINDKSKFAGKNIVIAGGGDSAVDWAISLSEIANKIYLVHRRDKFTAAPESVRQLRHIAETGKIELVTGYQLNALDGNNSELQSVIVKDLQNNTRKLDANILLPFFGLKQDLGSLANWGLNVKLHHIEVDNSYYQTNIEGIYAIGDIAHYAGKLKLILTGFAEAASSLHHAYSRVFDGKALHFEYSTTKYGERK.

FAD contacts are provided by Asp34, Gln42, Tyr47, Ala87, Phe121, Asp287, and Thr328.

Belongs to the ferredoxin--NADP reductase type 2 family. As to quaternary structure, homodimer. It depends on FAD as a cofactor.

The catalysed reaction is 2 reduced [2Fe-2S]-[ferredoxin] + NADP(+) + H(+) = 2 oxidized [2Fe-2S]-[ferredoxin] + NADPH. The polypeptide is Ferredoxin--NADP reductase (Rickettsia felis (strain ATCC VR-1525 / URRWXCal2) (Rickettsia azadi)).